The primary structure comprises 400 residues: Carnosine N-methyltransferase (400 aa).

Residues 1-51 form a disordered region; sequence MQRRQRAPPASQPAQDGGRSEDVEVQFSAGRLGSAAPAGPPARGTAEDEER. The span at 28–44 shows a compositional bias: low complexity; sequence SAGRLGSAAPAGPPARG. S-adenosyl-L-methionine contacts are provided by Gln155, Arg158, Gly199, Glu220, Asp286, Phe287, and Cys303. Asp307 is a carnosine binding site. An S-adenosyl-L-methionine-binding site is contributed by Tyr315. Carnosine-binding residues include His338 and Tyr389.

This sequence belongs to the carnosine N-methyltransferase family. Homodimer. Each monomer accommodates one molecule of carnosine in its active pocket, precisely anchoring the histidine imidazole ring such that only N1 is exposed and deprotonated for methylation.

It is found in the cytoplasm. The protein resides in the cytosol. It localises to the nucleus. The catalysed reaction is carnosine + S-adenosyl-L-methionine = anserine + S-adenosyl-L-homocysteine + H(+). In terms of biological role, N-methyltransferase that catalyzes the formation of anserine (beta-alanyl-N(Pi)-methyl-L-histidine) from carnosine. Anserine, a methylated derivative of carnosine (beta-alanyl-L-histidine), is an abundant constituent of vertebrate skeletal muscles. Also methylates other L-histidine-containing di- and tripeptides such as Gly-Gly-His, Gly-His and homocarnosine (GABA-His). This Mus musculus (Mouse) protein is Carnosine N-methyltransferase.